The chain runs to 685 residues: Probable serine/threonine-protein kinase CPE1738 (685 aa).

The 266-residue stretch at 10-275 (YELLQCVGEG…LEKIKKDPNV (266 aa)) folds into the Protein kinase domain. ATP is bound by residues 16–24 (VGEGGMSFV) and lysine 39. The active-site Proton acceptor is the glutamate 143. Residues 277–339 (ISSKSAEDED…NIQTKPQKAI (63 aa)) are disordered. Over residues 306 to 329 (EPDEDDEDDDEYYEDDEDEDEEEN) the composition is skewed to acidic residues. PASTA domains are found at residues 376 to 440 (GKDV…TVSG), 441 to 508 (GEGQ…TISK), 513 to 581 (KSET…TINY), and 589 to 648 (EKPK…TMEE). The segment at 480–500 (VPRGEVISQSPNANESVDKGS) is disordered. A disordered region spans residues 623–685 (DTAKVKSVSN…PKQPEQSGNN (63 aa)). Composition is skewed to low complexity over residues 627–645 (VKSV…VSVT) and 654–685 (QPTQ…SGNN).

Belongs to the protein kinase superfamily. Ser/Thr protein kinase family.

The catalysed reaction is L-seryl-[protein] + ATP = O-phospho-L-seryl-[protein] + ADP + H(+). The enzyme catalyses L-threonyl-[protein] + ATP = O-phospho-L-threonyl-[protein] + ADP + H(+). The chain is Probable serine/threonine-protein kinase CPE1738 from Clostridium perfringens (strain 13 / Type A).